The chain runs to 194 residues: Imidazoleglycerol-phosphate dehydratase (194 aa).

This sequence belongs to the imidazoleglycerol-phosphate dehydratase family.

It localises to the cytoplasm. The catalysed reaction is D-erythro-1-(imidazol-4-yl)glycerol 3-phosphate = 3-(imidazol-4-yl)-2-oxopropyl phosphate + H2O. Its pathway is amino-acid biosynthesis; L-histidine biosynthesis; L-histidine from 5-phospho-alpha-D-ribose 1-diphosphate: step 6/9. The protein is Imidazoleglycerol-phosphate dehydratase of Ruminiclostridium cellulolyticum (strain ATCC 35319 / DSM 5812 / JCM 6584 / H10) (Clostridium cellulolyticum).